The following is a 382-amino-acid chain: Lipid-A-disaccharide synthase (382 aa).

This sequence belongs to the LpxB family.

The catalysed reaction is 2-N,3-O-bis[(3R)-3-hydroxytetradecanoyl]-alpha-D-glucosaminyl 1-phosphate + UDP-2-N,3-O-bis[(3R)-3-hydroxytetradecanoyl]-alpha-D-glucosamine = lipid A disaccharide (E. coli) + UDP + H(+). It carries out the reaction a lipid X + a UDP-2-N,3-O-bis[(3R)-3-hydroxyacyl]-alpha-D-glucosamine = a lipid A disaccharide + UDP + H(+). Its pathway is glycolipid biosynthesis; lipid IV(A) biosynthesis; lipid IV(A) from (3R)-3-hydroxytetradecanoyl-[acyl-carrier-protein] and UDP-N-acetyl-alpha-D-glucosamine: step 5/6. In terms of biological role, condensation of UDP-2,3-diacylglucosamine and 2,3-diacylglucosamine-1-phosphate to form lipid A disaccharide, a precursor of lipid A, a phosphorylated glycolipid that anchors the lipopolysaccharide to the outer membrane of the cell. This chain is Lipid-A-disaccharide synthase, found in Escherichia coli O7:K1 (strain IAI39 / ExPEC).